Consider the following 144-residue polypeptide: D-aminoacyl-tRNA deacylase (144 aa).

The Gly-cisPro motif, important for rejection of L-amino acids motif lies at 136–137; it reads GP.

Belongs to the DTD family. In terms of assembly, homodimer.

The protein resides in the cytoplasm. It carries out the reaction glycyl-tRNA(Ala) + H2O = tRNA(Ala) + glycine + H(+). It catalyses the reaction a D-aminoacyl-tRNA + H2O = a tRNA + a D-alpha-amino acid + H(+). An aminoacyl-tRNA editing enzyme that deacylates mischarged D-aminoacyl-tRNAs. Also deacylates mischarged glycyl-tRNA(Ala), protecting cells against glycine mischarging by AlaRS. Acts via tRNA-based rather than protein-based catalysis; rejects L-amino acids rather than detecting D-amino acids in the active site. By recycling D-aminoacyl-tRNA to D-amino acids and free tRNA molecules, this enzyme counteracts the toxicity associated with the formation of D-aminoacyl-tRNA entities in vivo and helps enforce protein L-homochirality. The chain is D-aminoacyl-tRNA deacylase from Vibrio vulnificus (strain CMCP6).